We begin with the raw amino-acid sequence, 422 residues long: MTDIVDELKWRGLVALSTDEDALRKAFADGPVTFYCGFDPTAPSLHLGNLVQILTMRRIQQAGNRPLGLVGGATGLIGDPKPNSERTLNSREVVAEWVERLRAQIAPLLDFEGPNAAIMVNNLDWTQGLSAIEFLRDVGKYFRVNKMIAKEAVSRRLNSDAGISYTEFSYQILQGMDFLELYRRYGCTLQTGGSDQWGNLTSGTDLIHRAEPDAVVHALGTPLITKADGTKFGKTESGTIWLDPEMTTPYAFYQFWLNADDRDVSKFLRIFSFKSHEEIEELEKQTEERPQARAAQRALAEELTTLVHGADQTAAVIAASKALFGQGELTELDEATLAAALSELPHVKVAEPAPVVDLFAEVALVASKSAARRTIKEGGAYVNNVKVAAEDAVPAKEDLLHGRWLVLRRGKKNLAAVEVTGG.

Tyr-35 lines the L-tyrosine pocket. Residues Pro-40–Asn-49 carry the 'HIGH' region motif. Tyr-170 and Gln-174 together coordinate L-tyrosine. The 'KMSKS' region motif lies at Lys-231–Thr-235. Lys-234 contributes to the ATP binding site. The S4 RNA-binding domain occupies Ala-353–Val-419.

The protein belongs to the class-I aminoacyl-tRNA synthetase family. TyrS type 1 subfamily. Homodimer.

It localises to the cytoplasm. The catalysed reaction is tRNA(Tyr) + L-tyrosine + ATP = L-tyrosyl-tRNA(Tyr) + AMP + diphosphate + H(+). Catalyzes the attachment of tyrosine to tRNA(Tyr) in a two-step reaction: tyrosine is first activated by ATP to form Tyr-AMP and then transferred to the acceptor end of tRNA(Tyr). The protein is Tyrosine--tRNA ligase of Streptomyces avermitilis (strain ATCC 31267 / DSM 46492 / JCM 5070 / NBRC 14893 / NCIMB 12804 / NRRL 8165 / MA-4680).